The primary structure comprises 105 residues: MSNTTWGLQRDITPRLGARLVQEGNQLHYLADRASITGKFSDAECPKLDVVFPHFISQIESMLTTGELNPRHAQCVTLYHNGFTCEADTLGSCGYVYIAVYPTQR.

Belongs to the CbeA/YafW/YfjZ antitoxin family.

Functionally, antitoxin component of a type IV toxin-antitoxin (TA) system. Antitoxin that counteracts the effect of cognate toxin YpjF. Also counteracts the effect of non-cognate toxins CbtA and YfkI. The protein is Antitoxin YfjZ (yfjZ) of Escherichia coli (strain K12).